Reading from the N-terminus, the 638-residue chain is Outer dense fiber protein 2 (638 aa).

Threonine 73 is modified (phosphothreonine). Serine 76 carries the phosphoserine; by TSSK4 modification. Phosphoserine is present on residues serine 87 and serine 90. At threonine 91 the chain carries Phosphothreonine. Residues serine 96 and serine 110 each carry the phosphoserine modification. Lysine 119 is covalently cross-linked (Glycyl lysine isopeptide (Lys-Gly) (interchain with G-Cter in SUMO2)). Phosphoserine is present on serine 120. Residues 125–198 (QKGERQMAKR…MSKLVEAEMD (74 aa)) adopt a coiled-coil conformation. At threonine 212 the chain carries Phosphothreonine. 2 coiled-coil regions span residues 226–404 (DINT…AEQL) and 442–616 (EIIV…SDLR). Serine 242 carries the phosphoserine modification. The interval 373–396 (KQKGDRDKESLKKAIRAQKERAEK) is disordered. Serine 613 is modified (phosphoserine).

It belongs to the ODF2 family. Self-associates. Associates with microtubules and forms a fibrillar structure partially linked to the microtubule network. Interacts via its C-terminus with PLK1. Interacts with ODF1. Localized at the distal/subdistal appendages of mother centrioles. Interacts with MARK4; the interaction is required for localization of ODF2 to centrioles. Interacts with TSSK4. Interacts with AKNA. Interacts with QRICH2. Interacts with CFAP58. Interacts with BBOF1. Interacts with CCDC38. Interacts with CCDC42. In terms of processing, tyrosine phosphorylated. Phosphorylated on Ser-76 by TSSK4.

It is found in the cytoplasm. Its subcellular location is the cytoskeleton. The protein resides in the microtubule organizing center. The protein localises to the centrosome. It localises to the cell projection. It is found in the cilium. Its subcellular location is the centriole. The protein resides in the spindle pole. The protein localises to the flagellum. Functionally, seems to be a major component of sperm tail outer dense fibers (ODF). ODFs are filamentous structures located on the outside of the axoneme in the midpiece and principal piece of the mammalian sperm tail and may help to maintain the passive elastic structures and elastic recoil of the sperm tail. May have a modulating influence on sperm motility. Functions as a general scaffold protein that is specifically localized at the distal/subdistal appendages of mother centrioles. Component of the centrosome matrix required for the localization of PLK1 and NIN to the centrosomes. Required for the formation and/or maintenance of normal CETN1 assembly. This chain is Outer dense fiber protein 2 (ODF2), found in Macaca fascicularis (Crab-eating macaque).